A 691-amino-acid chain; its full sequence is DNA ligase (691 aa).

NAD(+) is bound by residues aspartate 41 to aspartate 45, serine 91 to leucine 92, and glutamate 121. The active-site N6-AMP-lysine intermediate is lysine 123. Residues arginine 144, glutamate 184, lysine 300, and lysine 324 each coordinate NAD(+). Zn(2+) contacts are provided by cysteine 418, cysteine 421, cysteine 437, and cysteine 443. The region spanning serine 607–threonine 691 is the BRCT domain.

Belongs to the NAD-dependent DNA ligase family. LigA subfamily. The cofactor is Mg(2+). It depends on Mn(2+) as a cofactor.

The catalysed reaction is NAD(+) + (deoxyribonucleotide)n-3'-hydroxyl + 5'-phospho-(deoxyribonucleotide)m = (deoxyribonucleotide)n+m + AMP + beta-nicotinamide D-nucleotide.. Its function is as follows. DNA ligase that catalyzes the formation of phosphodiester linkages between 5'-phosphoryl and 3'-hydroxyl groups in double-stranded DNA using NAD as a coenzyme and as the energy source for the reaction. It is essential for DNA replication and repair of damaged DNA. In Mycobacterium tuberculosis (strain ATCC 25177 / H37Ra), this protein is DNA ligase.